We begin with the raw amino-acid sequence, 79 residues long: uncharacterized protein (79 aa).

The tract at residues 1–27 (MRQRGQEHLPTSVKSEPRACNNPTVAE) is disordered.

This is an uncharacterized protein from Homo sapiens (Human).